The chain runs to 404 residues: Probable tRNA sulfurtransferase (404 aa).

Residues 60 to 165 (QPIVEALKLV…DEAAYISYEE (106 aa)) form the THUMP domain. ATP-binding positions include 183–184 (ML), 208–209 (HF), Arg265, Gly287, and Gln296.

It belongs to the ThiI family.

It is found in the cytoplasm. The enzyme catalyses [ThiI sulfur-carrier protein]-S-sulfanyl-L-cysteine + a uridine in tRNA + 2 reduced [2Fe-2S]-[ferredoxin] + ATP + H(+) = [ThiI sulfur-carrier protein]-L-cysteine + a 4-thiouridine in tRNA + 2 oxidized [2Fe-2S]-[ferredoxin] + AMP + diphosphate. It carries out the reaction [ThiS sulfur-carrier protein]-C-terminal Gly-Gly-AMP + S-sulfanyl-L-cysteinyl-[cysteine desulfurase] + AH2 = [ThiS sulfur-carrier protein]-C-terminal-Gly-aminoethanethioate + L-cysteinyl-[cysteine desulfurase] + A + AMP + 2 H(+). It participates in cofactor biosynthesis; thiamine diphosphate biosynthesis. Functionally, catalyzes the ATP-dependent transfer of a sulfur to tRNA to produce 4-thiouridine in position 8 of tRNAs, which functions as a near-UV photosensor. Also catalyzes the transfer of sulfur to the sulfur carrier protein ThiS, forming ThiS-thiocarboxylate. This is a step in the synthesis of thiazole, in the thiamine biosynthesis pathway. The sulfur is donated as persulfide by IscS. This Streptococcus pyogenes serotype M4 (strain MGAS10750) protein is Probable tRNA sulfurtransferase.